A 594-amino-acid polypeptide reads, in one-letter code: Proteasome-associated ATPase (594 aa).

Positions 20–98 form a coiled coil; that stretch reads DDLAAQVTYL…KEEIDRLAQP (79 aa). Residue 282-287 participates in ATP binding; the sequence is GCGKTL. The tract at residues 593 to 594 is docks into pockets in the proteasome alpha-ring; that stretch reads YL.

It belongs to the AAA ATPase family. Homohexamer. Assembles into a hexameric ring structure that caps the 20S proteasome core. Strongly interacts with the prokaryotic ubiquitin-like protein Pup through a hydrophobic interface; the interacting region of ARC lies in its N-terminal coiled-coil domain. There is one Pup binding site per ARC hexamer ring. Upon ATP-binding, the C-terminus of ARC interacts with the alpha-rings of the proteasome core, possibly by binding to the intersubunit pockets.

It participates in protein degradation; proteasomal Pup-dependent pathway. Its function is as follows. ATPase which is responsible for recognizing, binding, unfolding and translocation of pupylated proteins into the bacterial 20S proteasome core particle. May be essential for opening the gate of the 20S proteasome via an interaction with its C-terminus, thereby allowing substrate entry and access to the site of proteolysis. Thus, the C-termini of the proteasomal ATPase may function like a 'key in a lock' to induce gate opening and therefore regulate proteolysis. The sequence is that of Proteasome-associated ATPase from Catenulispora acidiphila (strain DSM 44928 / JCM 14897 / NBRC 102108 / NRRL B-24433 / ID139908).